The following is a 170-amino-acid chain: N-alpha-acetyltransferase 50 (170 aa).

An N-acetyltransferase domain is found at 6-155 (IELGDVTPHN…DAHVLQKNLK (150 aa)). Residue Tyr-31 coordinates substrate. The active site involves Tyr-73. Met-75 contacts substrate. Acetyl-CoA is bound at residue 77 to 90 (LGCLAPYRRLGIGT). 79-90 (CLAPYRRLGIGT) is a CoA binding site. His-112 is a catalytic residue. 117 to 126 (NESAIDFYRK) contributes to the CoA binding site. Residues 138-141 (YYKR) are substrate.

Belongs to the acetyltransferase family. GNAT subfamily.

It localises to the cytoplasm. The protein resides in the nucleus. The enzyme catalyses N-terminal L-methionyl-L-alanyl-[protein] + acetyl-CoA = N-terminal N(alpha)-acetyl-L-methionyl-L-alanyl-[protein] + CoA + H(+). It catalyses the reaction N-terminal L-methionyl-L-seryl-[protein] + acetyl-CoA = N-terminal N(alpha)-acetyl-L-methionyl-L-seryl-[protein] + CoA + H(+). The catalysed reaction is N-terminal L-methionyl-L-valyl-[protein] + acetyl-CoA = N-terminal N(alpha)-acetyl-L-methionyl-L-valyl-[protein] + CoA + H(+). It carries out the reaction N-terminal L-methionyl-L-threonyl-[protein] + acetyl-CoA = N-terminal N(alpha)-acetyl-L-methionyl-L-threonyl-[protein] + CoA + H(+). The enzyme catalyses N-terminal L-methionyl-L-lysyl-[protein] + acetyl-CoA = N-terminal N(alpha)-acetyl-L-methionyl-L-lysyl-[protein] + CoA + H(+). It catalyses the reaction N-terminal L-methionyl-L-leucyl-[protein] + acetyl-CoA = N-terminal N(alpha)-acetyl-L-methionyl-L-leucyl-[protein] + CoA + H(+). The catalysed reaction is N-terminal L-methionyl-L-phenylalanyl-[protein] + acetyl-CoA = N-terminal N(alpha)-acetyl-L-methionyl-L-phenylalanyl-[protein] + CoA + H(+). It carries out the reaction N-terminal L-methionyl-L-tyrosyl-[protein] + acetyl-CoA = N-terminal N(alpha)-acetyl-L-methionyl-L-tyrosyl-[protein] + CoA + H(+). Its function is as follows. N-alpha-acetyltransferase that acetylates the N-terminus of proteins that retain their initiating methionine. Has a broad substrate specificity: able to acetylate the initiator methionine of most peptides, except for those with a proline in second position. Also displays N-epsilon-acetyltransferase activity by mediating acetylation of the side chain of specific lysines on proteins. The relevance of N-epsilon-acetyltransferase activity is however unclear. Required for sister chromatid cohesion during mitosis by promoting binding of CDCA5/sororin to cohesin. This chain is N-alpha-acetyltransferase 50 (naa50), found in Xenopus laevis (African clawed frog).